Reading from the N-terminus, the 66-residue chain is Protein translocase subunit SecE (66 aa).

A helical membrane pass occupies residues 29–49 (LVASTLVVVVAVFIFSPICLV).

It belongs to the SecE/SEC61-gamma family. In terms of assembly, component of the Sec protein translocase complex. Heterotrimer consisting of SecY, SecE and SecG subunits. The heterotrimers can form oligomers, although 1 heterotrimer is thought to be able to translocate proteins. Interacts with the ribosome. Interacts with SecDF, and other proteins may be involved. Interacts with SecA.

It localises to the cell inner membrane. Essential subunit of the Sec protein translocation channel SecYEG. Clamps together the 2 halves of SecY. May contact the channel plug during translocation. The sequence is that of Protein translocase subunit SecE from Rickettsia montanensis.